The sequence spans 314 residues: Methionyl-tRNA formyltransferase (314 aa).

S111–P114 contributes to the (6S)-5,6,7,8-tetrahydrofolate binding site.

The protein belongs to the Fmt family.

The catalysed reaction is L-methionyl-tRNA(fMet) + (6R)-10-formyltetrahydrofolate = N-formyl-L-methionyl-tRNA(fMet) + (6S)-5,6,7,8-tetrahydrofolate + H(+). In terms of biological role, attaches a formyl group to the free amino group of methionyl-tRNA(fMet). The formyl group appears to play a dual role in the initiator identity of N-formylmethionyl-tRNA by promoting its recognition by IF2 and preventing the misappropriation of this tRNA by the elongation apparatus. The protein is Methionyl-tRNA formyltransferase of Chlorobium chlorochromatii (strain CaD3).